A 77-amino-acid polypeptide reads, in one-letter code: Large ribosomal subunit protein uL29 (77 aa).

Belongs to the universal ribosomal protein uL29 family.

This is Large ribosomal subunit protein uL29 from Cutibacterium acnes (strain DSM 16379 / KPA171202) (Propionibacterium acnes).